Reading from the N-terminus, the 533-residue chain is Phospho-2-dehydro-3-deoxyheptonate aldolase 1, chloroplastic (533 aa).

The transit peptide at 1-57 (MALSTNSTTSSLLPKTPLVQQPLLKNASLPTTTKAIRFIQPISAIHSSDSSKNTPIV) directs the protein to the chloroplast. The segment covering 47–56 (SSDSSKNTPI) has biased composition (polar residues). The disordered stretch occupies residues 47-70 (SSDSSKNTPIVSAKPSSPPAATST). Residues 57–70 (VSAKPSSPPAATST) are compositionally biased toward low complexity. Cysteine 145 provides a ligand contact to Mn(2+). Residues arginine 184, 343–344 (ER), lysine 366, and arginine 397 contribute to the substrate site. Residues histidine 429, glutamate 471, and aspartate 501 each coordinate Mn(2+).

The protein belongs to the class-II DAHP synthase family. Homodimer. It depends on Mn(2+) as a cofactor. In terms of tissue distribution, mostly expressed in flowers, especially in petal limbs and tubes, and, to a lower extent, in roots, stems, stigmas, anthers, leaves and sepals.

The protein localises to the plastid. It is found in the chloroplast. It catalyses the reaction D-erythrose 4-phosphate + phosphoenolpyruvate + H2O = 7-phospho-2-dehydro-3-deoxy-D-arabino-heptonate + phosphate. It functions in the pathway metabolic intermediate biosynthesis; chorismate biosynthesis; chorismate from D-erythrose 4-phosphate and phosphoenolpyruvate: step 1/7. Its function is as follows. Involved in the production of volatile organic compounds (VOCs), including floral volatile benzenoids and phenylpropanoids (FVBP), in flowers of fragrant cultivars (e.g. cv. Mitchell and cv. V26), scent attracting pollinators (e.g. the night-active hawkmoth pollinator Manduca sexta). Catalyzes an aldol-like condensation reaction between phosphoenolpyruvate (PEP) and D-erythrose 4-phosphate (E4P) to generate 3-deoxy-D-arabino-heptulosonate 7-phosphate (DAH7P) and inorganic phosphate. The sequence is that of Phospho-2-dehydro-3-deoxyheptonate aldolase 1, chloroplastic from Petunia hybrida (Petunia).